The sequence spans 146 residues: D-aminoacyl-tRNA deacylase (146 aa).

Positions G138–P139 match the Gly-cisPro motif, important for rejection of L-amino acids motif.

It belongs to the DTD family. Homodimer.

It is found in the cytoplasm. It catalyses the reaction glycyl-tRNA(Ala) + H2O = tRNA(Ala) + glycine + H(+). The catalysed reaction is a D-aminoacyl-tRNA + H2O = a tRNA + a D-alpha-amino acid + H(+). Its function is as follows. An aminoacyl-tRNA editing enzyme that deacylates mischarged D-aminoacyl-tRNAs. Also deacylates mischarged glycyl-tRNA(Ala), protecting cells against glycine mischarging by AlaRS. Acts via tRNA-based rather than protein-based catalysis; rejects L-amino acids rather than detecting D-amino acids in the active site. By recycling D-aminoacyl-tRNA to D-amino acids and free tRNA molecules, this enzyme counteracts the toxicity associated with the formation of D-aminoacyl-tRNA entities in vivo and helps enforce protein L-homochirality. This chain is D-aminoacyl-tRNA deacylase, found in Stenotrophomonas maltophilia (strain K279a).